We begin with the raw amino-acid sequence, 388 residues long: Ribonuclease D (388 aa).

The 168-residue stretch at 24–191 (QYVSDEASLN…LYPQLADKLK (168 aa)) folds into the 3'-5' exonuclease domain. The region spanning 230–310 (TEHQLAYLKV…QTADLSNPPE (81 aa)) is the HRDC domain.

The protein belongs to the RNase D family. A divalent metal cation serves as cofactor.

It is found in the cytoplasm. It carries out the reaction Exonucleolytic cleavage that removes extra residues from the 3'-terminus of tRNA to produce 5'-mononucleotides.. Exonuclease involved in the 3' processing of various precursor tRNAs. Initiates hydrolysis at the 3'-terminus of an RNA molecule and releases 5'-mononucleotides. The polypeptide is Ribonuclease D (Shewanella sp. (strain ANA-3)).